Here is a 500-residue protein sequence, read N- to C-terminus: NAD(P)H-quinone oxidoreductase chain 4, chloroplastic (500 aa).

14 consecutive transmembrane segments (helical) span residues 3–23 (FFPWLTIIVVLPISAGSLIFF), 37–57 (ICICLLELLLITYVFCYHFQL), 87–107 (IGPILLTGFITTLATLAAWPI), 113–130 (LFHFLMLAMYSGQIGSFS), 134–154 (LLLFFIMWELELIPVYLLLSM), 167–187 (FILYTAGGSIFLLMGVLGMGL), 208–228 (ALEIMFYFGFLIAYAVKSPII), 242–262 (HYSTCMLLAGILLKMGAYGLV), 272–292 (AHSIFSPWLMIVGTIQIIYAA), 305–325 (IAYSSVSHMGFTIIGIGSITD), 330–350 (GAVLQIISHGFIGAALFFLAG), 386–406 (LALPGMSGFVAELIVFFGIIT), 416–436 (ILITFVMAIGMILTPIYSLSM), and 462–482 (LFVSISIFLPVIGIGIYPDFV).

Belongs to the complex I subunit 4 family.

It localises to the plastid. It is found in the chloroplast thylakoid membrane. It catalyses the reaction a plastoquinone + NADH + (n+1) H(+)(in) = a plastoquinol + NAD(+) + n H(+)(out). The enzyme catalyses a plastoquinone + NADPH + (n+1) H(+)(in) = a plastoquinol + NADP(+) + n H(+)(out). In Platanus occidentalis (Sycamore), this protein is NAD(P)H-quinone oxidoreductase chain 4, chloroplastic.